A 208-amino-acid chain; its full sequence is Imidazole glycerol phosphate synthase subunit HisH (208 aa).

The Glutamine amidotransferase type-1 domain maps to methionine 1–serine 206. The active-site Nucleophile is the cysteine 79. Residues histidine 181 and glutamate 183 contribute to the active site.

As to quaternary structure, heterodimer of HisH and HisF.

Its subcellular location is the cytoplasm. It carries out the reaction 5-[(5-phospho-1-deoxy-D-ribulos-1-ylimino)methylamino]-1-(5-phospho-beta-D-ribosyl)imidazole-4-carboxamide + L-glutamine = D-erythro-1-(imidazol-4-yl)glycerol 3-phosphate + 5-amino-1-(5-phospho-beta-D-ribosyl)imidazole-4-carboxamide + L-glutamate + H(+). The catalysed reaction is L-glutamine + H2O = L-glutamate + NH4(+). The protein operates within amino-acid biosynthesis; L-histidine biosynthesis; L-histidine from 5-phospho-alpha-D-ribose 1-diphosphate: step 5/9. Functionally, IGPS catalyzes the conversion of PRFAR and glutamine to IGP, AICAR and glutamate. The HisH subunit catalyzes the hydrolysis of glutamine to glutamate and ammonia as part of the synthesis of IGP and AICAR. The resulting ammonia molecule is channeled to the active site of HisF. This is Imidazole glycerol phosphate synthase subunit HisH from Listeria monocytogenes serovar 1/2a (strain ATCC BAA-679 / EGD-e).